Consider the following 236-residue polypeptide: tRNA (guanine-N(7)-)-methyltransferase (236 aa).

Residues Asp-35, Glu-60, Asn-87, and Asp-113 each coordinate S-adenosyl-L-methionine. Asp-113 is an active-site residue. Lys-117 and Asp-149 together coordinate substrate.

The protein belongs to the class I-like SAM-binding methyltransferase superfamily. TrmB family.

The enzyme catalyses guanosine(46) in tRNA + S-adenosyl-L-methionine = N(7)-methylguanosine(46) in tRNA + S-adenosyl-L-homocysteine. Its pathway is tRNA modification; N(7)-methylguanine-tRNA biosynthesis. Catalyzes the formation of N(7)-methylguanine at position 46 (m7G46) in tRNA. The sequence is that of tRNA (guanine-N(7)-)-methyltransferase from Prochlorococcus marinus (strain MIT 9303).